The primary structure comprises 341 residues: Methionine import ATP-binding protein MetN 2 (341 aa).

The 240-residue stretch at 2-241 (IELKEVVKEY…PQHAVTKRFV (240 aa)) folds into the ABC transporter domain. ATP is bound at residue 38–45 (GFSGAGKS).

The protein belongs to the ABC transporter superfamily. Methionine importer (TC 3.A.1.24) family. In terms of assembly, the complex is composed of two ATP-binding proteins (MetN), two transmembrane proteins (MetI) and a solute-binding protein (MetQ).

It is found in the cell membrane. The enzyme catalyses L-methionine(out) + ATP + H2O = L-methionine(in) + ADP + phosphate + H(+). The catalysed reaction is D-methionine(out) + ATP + H2O = D-methionine(in) + ADP + phosphate + H(+). Part of the ABC transporter complex MetNIQ involved in methionine import. Responsible for energy coupling to the transport system. This chain is Methionine import ATP-binding protein MetN 2, found in Staphylococcus aureus (strain MRSA252).